The primary structure comprises 348 residues: D-erythrose-4-phosphate dehydrogenase (348 aa).

NAD(+) contacts are provided by residues 12–13 and R81; that span reads RI. Substrate contacts are provided by residues 154 to 156, R200, 213 to 214, and R236; these read SCT and TK. Residue C155 is the Nucleophile of the active site. N318 provides a ligand contact to NAD(+).

The protein belongs to the glyceraldehyde-3-phosphate dehydrogenase family. Epd subfamily. In terms of assembly, homotetramer.

The protein resides in the cytoplasm. The catalysed reaction is D-erythrose 4-phosphate + NAD(+) + H2O = 4-phospho-D-erythronate + NADH + 2 H(+). It participates in cofactor biosynthesis; pyridoxine 5'-phosphate biosynthesis; pyridoxine 5'-phosphate from D-erythrose 4-phosphate: step 1/5. In terms of biological role, catalyzes the NAD-dependent conversion of D-erythrose 4-phosphate to 4-phosphoerythronate. The chain is D-erythrose-4-phosphate dehydrogenase from Salmonella paratyphi A (strain ATCC 9150 / SARB42).